A 77-amino-acid chain; its full sequence is UPF0248 protein Pcal_0252 (77 aa).

The protein belongs to the UPF0248 family.

The polypeptide is UPF0248 protein Pcal_0252 (Pyrobaculum calidifontis (strain DSM 21063 / JCM 11548 / VA1)).